The chain runs to 232 residues: CD302 antigen (232 aa).

A signal peptide spans 1 to 22 (MPRAAPPALLLPLLGLAAAAAA). Residues 23–168 (DCPSSTWVQF…YEKKYLSDNR (146 aa)) are Extracellular-facing. The 121-residue stretch at 32 to 152 (FQDSCYIFLQ…CEVSSVEGTL (121 aa)) folds into the C-type lectin domain. An N-linked (GlcNAc...) asparagine glycan is attached at N109. Residues C128 and C143 are joined by a disulfide bond. A helical transmembrane segment spans residues 169-189 (ILISALVIASTVILTVLGAVV). At 190–232 (WFLYKRSLDSGFTTVFSAAHQSPYNDDCVLVVAEENEYDIQFN) the chain is on the cytoplasmic side.

It localises to the membrane. The protein resides in the cell projection. The protein localises to the filopodium. Its subcellular location is the cytoplasm. It is found in the cell cortex. It localises to the microvillus. Functionally, potential multifunctional C-type lectin receptor that may play roles in endocytosis and phagocytosis as well as in cell adhesion and migration. The protein is CD302 antigen of Bos taurus (Bovine).